We begin with the raw amino-acid sequence, 901 residues long: Protein translocase subunit SecA (901 aa).

Residues Gln87, 105–109 (GEGKT), and Asp512 contribute to the ATP site. Zn(2+) is bound by residues Cys885, Cys887, Cys896, and His897.

It belongs to the SecA family. Monomer and homodimer. Part of the essential Sec protein translocation apparatus which comprises SecA, SecYEG and auxiliary proteins SecDF-YajC and YidC. It depends on Zn(2+) as a cofactor.

It is found in the cell inner membrane. Its subcellular location is the cytoplasm. It catalyses the reaction ATP + H2O + cellular proteinSide 1 = ADP + phosphate + cellular proteinSide 2.. Its function is as follows. Part of the Sec protein translocase complex. Interacts with the SecYEG preprotein conducting channel. Has a central role in coupling the hydrolysis of ATP to the transfer of proteins into and across the cell membrane, serving both as a receptor for the preprotein-SecB complex and as an ATP-driven molecular motor driving the stepwise translocation of polypeptide chains across the membrane. In Salmonella agona (strain SL483), this protein is Protein translocase subunit SecA.